Reading from the N-terminus, the 1314-residue chain is E3 ubiquitin-protein ligase RNF123 (1314 aa).

A2 is subject to N-acetylalanine. The B30.2/SPRY domain occupies 74–254 (VDNEEEESQG…VAFNFGSRPL (181 aa)). S675 carries the phosphoserine modification. At R683 the chain carries Asymmetric dimethylarginine. The interaction with NFKB1 stretch occupies residues 968 to 974 (WILVRLW). C1254, C1257, C1269, H1271, C1274, C1277, C1288, and C1291 together coordinate Zn(2+). Residues 1254–1292 (CPICYAHPISAVFQPCGHKSCKACINQHLMNNKDCFFCK) form an RING-type zinc finger.

Component of the KPC complex composed of RNF123/KPC1 and UBAC1/KPC2. Interacts with UBAC1 and CDKN1B via its N-terminal domain. Interacts with RIGI (via N-terminus) and IFIH1 (via N-terminus). Post-translationally, ubiquitinated, leading to its degradation. Deubiquitinated by USP19, thereby stimulating CDKN1B ubiquitin-dependent degradation.

It localises to the cytoplasm. It catalyses the reaction S-ubiquitinyl-[E2 ubiquitin-conjugating enzyme]-L-cysteine + [acceptor protein]-L-lysine = [E2 ubiquitin-conjugating enzyme]-L-cysteine + N(6)-ubiquitinyl-[acceptor protein]-L-lysine.. The protein operates within protein modification; protein ubiquitination. In terms of biological role, catalytic subunit of the KPC complex that acts as E3 ubiquitin-protein ligase. Promotes the ubiquitination and proteasome-mediated degradation of CDKN1B which is the cyclin-dependent kinase inhibitor at the G0-G1 transition of the cell cycle. Also acts as a key regulator of the NF-kappa-B signaling by promoting maturation of the NFKB1 component of NF-kappa-B: acts by catalyzing ubiquitination of the NFKB1 p105 precursor, leading to limited proteasomal degradation of NFKB1 p105 and generation of the active NFKB1 p50 subunit. Also functions as an inhibitor of innate antiviral signaling mediated by RIGI and IFIH1 independently of its E3 ligase activity. Interacts with the N-terminal CARD domains of RIGI and IFIH1 and competes with the downstream adapter MAVS. The protein is E3 ubiquitin-protein ligase RNF123 of Homo sapiens (Human).